Consider the following 199-residue polypeptide: Shikimate kinase (199 aa).

32-37 (GSGKTS) provides a ligand contact to ATP. Residue threonine 36 participates in Mg(2+) binding. Residues aspartate 54, arginine 78, and glycine 100 each contribute to the substrate site. An ATP-binding site is contributed by arginine 138. Arginine 157 is a substrate binding site.

Belongs to the shikimate kinase family. Monomer. Mg(2+) serves as cofactor.

Its subcellular location is the cytoplasm. The enzyme catalyses shikimate + ATP = 3-phosphoshikimate + ADP + H(+). Its pathway is metabolic intermediate biosynthesis; chorismate biosynthesis; chorismate from D-erythrose 4-phosphate and phosphoenolpyruvate: step 5/7. Functionally, catalyzes the specific phosphorylation of the 3-hydroxyl group of shikimic acid using ATP as a cosubstrate. The protein is Shikimate kinase of Synechococcus sp. (strain CC9605).